Reading from the N-terminus, the 204-residue chain is GTP cyclohydrolase 1 (204 aa).

3 residues coordinate Zn(2+): Cys-92, His-95, and Cys-165.

It belongs to the GTP cyclohydrolase I family. In terms of assembly, homomer.

It carries out the reaction GTP + H2O = 7,8-dihydroneopterin 3'-triphosphate + formate + H(+). Its pathway is cofactor biosynthesis; 7,8-dihydroneopterin triphosphate biosynthesis; 7,8-dihydroneopterin triphosphate from GTP: step 1/1. This Mycolicibacterium paratuberculosis (strain ATCC BAA-968 / K-10) (Mycobacterium paratuberculosis) protein is GTP cyclohydrolase 1.